Here is a 622-residue protein sequence, read N- to C-terminus: Chaperone protein HscA homolog (622 aa).

It belongs to the heat shock protein 70 family.

Functionally, chaperone involved in the maturation of iron-sulfur cluster-containing proteins. Has a low intrinsic ATPase activity which is markedly stimulated by HscB. This chain is Chaperone protein HscA homolog, found in Burkholderia lata (strain ATCC 17760 / DSM 23089 / LMG 22485 / NCIMB 9086 / R18194 / 383).